The sequence spans 206 residues: Urease accessory protein UreE (206 aa).

The tract at residues Pro136 to Lys206 is disordered. 2 stretches are compositionally biased toward basic and acidic residues: residues Gln148 to Glu169 and His177 to Gly191. Positions His192–Lys206 are enriched in basic residues.

Belongs to the UreE family.

It localises to the cytoplasm. Involved in urease metallocenter assembly. Binds nickel. Probably functions as a nickel donor during metallocenter assembly. The polypeptide is Urease accessory protein UreE (Bradyrhizobium sp. (strain BTAi1 / ATCC BAA-1182)).